The sequence spans 144 residues: UPF0102 protein BMA2801 (144 aa).

The interval methionine 1–serine 28 is disordered.

The protein belongs to the UPF0102 family.

The sequence is that of UPF0102 protein BMA2801 from Burkholderia mallei (strain ATCC 23344).